Here is a 448-residue protein sequence, read N- to C-terminus: Deoxyguanosinetriphosphate triphosphohydrolase-like protein (448 aa).

The HD domain maps to 67–260; it reads RLTHSLEVSQ…MELADDIAYG (194 aa).

The protein belongs to the dGTPase family. Type 2 subfamily.

This chain is Deoxyguanosinetriphosphate triphosphohydrolase-like protein, found in Aliivibrio fischeri (strain ATCC 700601 / ES114) (Vibrio fischeri).